We begin with the raw amino-acid sequence, 524 residues long: Probable glycine dehydrogenase (decarboxylating) subunit 2 (524 aa).

Lysine 296 is modified (N6-(pyridoxal phosphate)lysine).

This sequence belongs to the GcvP family. C-terminal subunit subfamily. In terms of assembly, the glycine cleavage system is composed of four proteins: P, T, L and H. In this organism, the P 'protein' is a heterodimer of two subunits. Pyridoxal 5'-phosphate serves as cofactor.

It catalyses the reaction N(6)-[(R)-lipoyl]-L-lysyl-[glycine-cleavage complex H protein] + glycine + H(+) = N(6)-[(R)-S(8)-aminomethyldihydrolipoyl]-L-lysyl-[glycine-cleavage complex H protein] + CO2. The glycine cleavage system catalyzes the degradation of glycine. The P protein binds the alpha-amino group of glycine through its pyridoxal phosphate cofactor; CO(2) is released and the remaining methylamine moiety is then transferred to the lipoamide cofactor of the H protein. This chain is Probable glycine dehydrogenase (decarboxylating) subunit 2, found in Caulobacter vibrioides (strain ATCC 19089 / CIP 103742 / CB 15) (Caulobacter crescentus).